The following is a 352-amino-acid chain: Inhibin beta C chain (352 aa).

Residues 1-18 (MTSSLLLAFLLLAPTTVA) form the signal peptide. A propeptide spanning residues 19-236 (TPRAGGQCPA…VGGKHQIHRR (218 aa)) is cleaved from the precursor. Asn-110, Asn-143, and Asn-161 each carry an N-linked (GlcNAc...) asparagine glycan. Intrachain disulfides connect Cys-240/Cys-248, Cys-247/Cys-317, Cys-276/Cys-349, and Cys-280/Cys-351.

Belongs to the TGF-beta family. Homodimeric or heterodimeric through association with alpha and beta subunits, linked by one or more disulfide bonds. Inhibins are heterodimers of one alpha and one beta subunit. Activins are homo- or heterodimers of beta subunits only. As to expression, expressed in benign prostatic hyperplasia.

The protein localises to the secreted. Its function is as follows. Inhibins and activins inhibit and activate, respectively, the secretion of follitropin by the pituitary gland. Inhibins/activins are involved in regulating a number of diverse functions such as hypothalamic and pituitary hormone secretion, gonadal hormone secretion, germ cell development and maturation, erythroid differentiation, insulin secretion, nerve cell survival, embryonic axial development or bone growth, depending on their subunit composition. Inhibins appear to oppose the functions of activins. The sequence is that of Inhibin beta C chain (INHBC) from Homo sapiens (Human).